Reading from the N-terminus, the 37-residue chain is Large ribosomal subunit protein bL36 (37 aa).

It belongs to the bacterial ribosomal protein bL36 family.

In Legionella pneumophila subsp. pneumophila (strain Philadelphia 1 / ATCC 33152 / DSM 7513), this protein is Large ribosomal subunit protein bL36.